The sequence spans 71 residues: MAGMALARAWKQMSWFYYQYLLVTALYMLEPWERTVFNSMLVSVVGMALYTGYVFMPQHIMAILHYFEIVQ.

Residues 1-12 (MAGMALARAWKQ) are Cytoplasmic-facing. A helical transmembrane segment spans residues 13–29 (MSWFYYQYLLVTALYML). Residues 30–34 (EPWER) are Lumenal-facing. A helical membrane pass occupies residues 35-57 (TVFNSMLVSVVGMALYTGYVFMP). Residues 58–71 (QHIMAILHYFEIVQ) lie on the Cytoplasmic side of the membrane.

This sequence belongs to the SPTSS family. SPTSSA subfamily. In terms of assembly, component of the serine palmitoyltransferase (SPT) complex, which is composed of SPTLC1, SPTLC2 or SPTLC3 and SPTSSA or SPTSSB. The heterodimer consisting of SPTLC1 and SPTLC2/SPTLC3 forms the catalytic core of the enzyme, while SPTSSA or SPTSSB subunits determine substrate specificity. SPT also interacts with ORMDL proteins, especially ORMDL3, which negatively regulate SPT activity in the presence of ceramides. Interacts with MBOAT7; the interaction plays a role in MBOAT7 localization to mitochondria-associated membranes.

The protein resides in the endoplasmic reticulum membrane. It functions in the pathway lipid metabolism; sphingolipid metabolism. Functionally, component of the serine palmitoyltransferase multisubunit enzyme (SPT) that catalyzes the initial and rate-limiting step in sphingolipid biosynthesis by condensing L-serine and activated acyl-CoA (most commonly palmitoyl-CoA) to form long-chain bases. The SPT complex is composed of SPTLC1, SPTLC2 or SPTLC3 and SPTSSA or SPTSSB. Within this complex, the heterodimer consisting of SPTLC1 and SPTLC2/SPTLC3 forms the catalytic core. Within the SPT complex, SPTSSA stimulates the catalytic activity and plays a role in substrate specificity, which depends upon the overall complex composition. The SPTLC1-SPTLC2-SPTSSA complex shows a strong preference for C16-CoA substrate, while the SPTLC1-SPTLC3-SPTSSA isozyme uses both C14-CoA and C16-CoA as substrates, with a slight preference for C14-CoA. Independently of its action as a SPT component, may be involved in MBOAT7 localization to mitochondria-associated membranes, a membrane bridge between the endoplasmic reticulum and mitochondria, may hence affect MBOAT7-catalyzed incorporation of arachidonic acid into phosphatidylinositol. This chain is Serine palmitoyltransferase small subunit A, found in Mus musculus (Mouse).